The chain runs to 383 residues: Dual-specificity RNA methyltransferase RlmN (383 aa).

The Proton acceptor role is filled by Glu-93. Positions 99–339 (EETRGTLCVS…TTIRKTRGDD (241 aa)) constitute a Radical SAM core domain. Cys-106 and Cys-344 are joined by a disulfide. Positions 113, 117, and 120 each coordinate [4Fe-4S] cluster. S-adenosyl-L-methionine is bound by residues 170-171 (GE), Ser-202, 224-226 (SLH), and Asn-301. Residue Cys-344 is the S-methylcysteine intermediate of the active site.

This sequence belongs to the radical SAM superfamily. RlmN family. The cofactor is [4Fe-4S] cluster.

It localises to the cytoplasm. It catalyses the reaction adenosine(2503) in 23S rRNA + 2 reduced [2Fe-2S]-[ferredoxin] + 2 S-adenosyl-L-methionine = 2-methyladenosine(2503) in 23S rRNA + 5'-deoxyadenosine + L-methionine + 2 oxidized [2Fe-2S]-[ferredoxin] + S-adenosyl-L-homocysteine. It carries out the reaction adenosine(37) in tRNA + 2 reduced [2Fe-2S]-[ferredoxin] + 2 S-adenosyl-L-methionine = 2-methyladenosine(37) in tRNA + 5'-deoxyadenosine + L-methionine + 2 oxidized [2Fe-2S]-[ferredoxin] + S-adenosyl-L-homocysteine. Its function is as follows. Specifically methylates position 2 of adenine 2503 in 23S rRNA and position 2 of adenine 37 in tRNAs. m2A2503 modification seems to play a crucial role in the proofreading step occurring at the peptidyl transferase center and thus would serve to optimize ribosomal fidelity. The chain is Dual-specificity RNA methyltransferase RlmN from Ralstonia nicotianae (strain ATCC BAA-1114 / GMI1000) (Ralstonia solanacearum).